An 802-amino-acid chain; its full sequence is MGHPPLEFSDCYLDSPDFRERLKCYEQELERTNKFIKDVIKDGNALISAMRNYSSAVQKFSQTLQSFQFDFIGDTLTDDEINIAESFKEFAELLNEVENERMMMVHNASDLLIKPLENFRKEQIGFTKERKKKFEKDGERFYSLLDRHLHLSSKKKESQLQEADLQVDKERHNFFESSLDYVYQIQEVQESKKFNIVEPVLAFLHSLFISNSLTVELTQDFLPYKQQLQLSLQNTRNHFSSTREEMEELKKRMKEAPQTCKLPGQPTIEGYLYTQEKWALGISWVKYYCQYEKETKTLTMTPMEQKPGAKQGPLDLTLKYCVRRKTESIDKRFCFDIETNERPGTITLQALSEANRRLWMEAMDGKEPIYHSPITKQQEMELNEVGFKFVRKCINIIETKGIKTEGLYRTVGSNIQVQKLLNAFFDPKCPGDVDFHNSDWDIKTITSSLKFYLRNLSEPVMTYRLHKELVSAAKSDNLDYRLGAIHSLVYKLPEKNREMLELLIRHLVNVCEHSKENLMTPSNMGVIFGPTLMRAQEDTVAAMMNIKFQNIVVEILIEHFGKIYLGPPEESAAPPVPPPRVTARRHKPITISKRLLRERTVFYTSSLDESEDEIQHQTPNGTITSSIEPPKPPQHPKLPIQRSGETDPGRKSPSRPISDGKLEPCPEVDVGKLVSRLQDGGTKITPKATNGPMPGSGPTKTPSFHIKRPAPRPLAHHKEGDADSFSKVRPPGEKPTIIRPPVRPPDPPCRAATPQKPEPKPDIVAGNAGEITSSVVASRTRFFETASRKTGSSQGRLPGDES.

The PH domain occupies 265–368 (QPTIEGYLYT…WMEAMDGKEP (104 aa)). Positions 380-564 (MELNEVGFKF…ILIEHFGKIY (185 aa)) constitute a Rho-GAP domain. Disordered stretches follow at residues 569–589 (EESA…HKPI), 607–770 (LDES…NAGE), and 783–802 (FETA…GDES). Residues 616–627 (HQTPNGTITSSI) are compositionally biased toward polar residues. Positions 716-732 (HHKEGDADSFSKVRPPG) are enriched in basic and acidic residues.

Interacts with HOMER1. Interacts with AMPA receptor complexes. Interacts with SH3GL2 (endophilin-A1). Interacts (via C-terminus) with NR1D1.

The protein localises to the postsynapse. It localises to the presynapse. It is found in the cell projection. Its subcellular location is the axon. The protein resides in the dendritic spine. The protein localises to the dendrite. It localises to the cytoplasm. Functionally, stimulates GTP hydrolysis of members of the Rho family. Its action on RHOA activity and signaling is implicated in growth and stabilization of dendritic spines, and therefore in synaptic function. Critical for the stabilization of AMPA receptors at postsynaptic sites. Critical for the regulation of synaptic vesicle endocytosis at pre-synaptic terminals. Required for the localization of NR1D1 to dendrites, can suppress its repressor activity and protect it from proteasomal degradation. The protein is Oligophrenin-1 (OPHN1) of Pan troglodytes (Chimpanzee).